The sequence spans 634 residues: MNALKNFFIWAIIIGAAIVAFNLFEGKREFTTKVSLNEVVKLVEEGKVSYAEVRGNTAIIQTKDGQKLEVTLPPNTNLVDKMVEKGVRVEVANPEPPGGWLVNVFLSWLPILFFIGIWIFLLRQMSGGGNVNRAFNFGKSRAKVYIEEKPKVTFKDVAGIEEVKEEVKEIIEYLKDPVKFQKLGGRPPKGVLLYGEPGVGKTLLAKAIAGEAHVPFISVSGSDFVEMFVGVGAARVRDLFETAKKHAPCIIFIDEIDAVGRARGAIPVGGGHDEREQTLNQLLVEMDGFDTSDGIIVIAATNRPDILDPALLRPGRFDRQIFIPKPDVRGRYEILKVHARNKKLAKDVDLEFVARATPGFTGADLENLLNEAALLAARKGKEEITMEEIEEALDRITMGLERKGMTISPKEKEKIAIHEAGHALMGLVSDDDDKVHKISIIPRGMALGVTQQLPIEDKHIYDKKDLYNKILVLLGGRAAEEVFFGKDGITTGAENDLQRATDLAYRMVSMWGMSDKVGPIAIRRVANPFLGGMTTAVDTSPDLLREIDEEVKRIITEQYEKAKAIVEEYKEPLKAVVKKLLEKETITCEEFVEVFKLYGIELKDKCKKEELFDKDRKSEENKELKSEEVKEEVV.

Topologically, residues 1–5 are cytoplasmic; that stretch reads MNALK. A helical membrane pass occupies residues 6–26; that stretch reads NFFIWAIIIGAAIVAFNLFEG. The Periplasmic segment spans residues 27-100; the sequence is KREFTTKVSL…VANPEPPGGW (74 aa). A helical membrane pass occupies residues 101 to 121; it reads LVNVFLSWLPILFFIGIWIFL. Residues 122 to 634 lie on the Cytoplasmic side of the membrane; it reads LRQMSGGGNV…KSEEVKEEVV (513 aa). Residue 195 to 202 coordinates ATP; the sequence is GEPGVGKT. H418 contacts Zn(2+). E419 is a catalytic residue. Zn(2+) contacts are provided by H422 and D496. Residues 615–634 are disordered; the sequence is DRKSEENKELKSEEVKEEVV.

The protein in the central section; belongs to the AAA ATPase family. It in the C-terminal section; belongs to the peptidase M41 family. The isolated protease domain (residues 405-634) forms a stable hexamer. Requires Zn(2+) as cofactor.

It localises to the cell inner membrane. Acts as a processive, ATP-dependent zinc metallopeptidase for both cytoplasmic and membrane proteins. Plays a role in the quality control of integral membrane proteins. The protein is ATP-dependent zinc metalloprotease FtsH of Aquifex aeolicus (strain VF5).